Here is a 757-residue protein sequence, read N- to C-terminus: Glutathione biosynthesis bifunctional protein GshAB (757 aa).

The glutamate--cysteine ligase stretch occupies residues 1–337 (MNIQQIVKEK…LGRARLGEVA (337 aa)). One can recognise an ATP-grasp domain in the interval 494-757 (KKVLAKAGFN…VLGMLFPELV (264 aa)). 521-580 (PLFEGKAVVIKPKSTNFGLGISIFQQGVHDKADFAKAVEIAFREDKEVMVEDYLVGTEYR) lines the ATP pocket. 3 residues coordinate Mg(2+): Asp-702, Glu-723, and Asn-725. The Mn(2+) site is built by Asp-702, Glu-723, and Asn-725.

In the N-terminal section; belongs to the glutamate--cysteine ligase type 1 family. Type 2 subfamily. Monomer. The cofactor is Mg(2+). Mn(2+) is required as a cofactor.

The enzyme catalyses L-cysteine + L-glutamate + ATP = gamma-L-glutamyl-L-cysteine + ADP + phosphate + H(+). The catalysed reaction is gamma-L-glutamyl-L-cysteine + glycine + ATP = glutathione + ADP + phosphate + H(+). Its pathway is sulfur metabolism; glutathione biosynthesis; glutathione from L-cysteine and L-glutamate: step 1/2. It participates in sulfur metabolism; glutathione biosynthesis; glutathione from L-cysteine and L-glutamate: step 2/2. Functionally, synthesizes glutathione from L-glutamate and L-cysteine via gamma-L-glutamyl-L-cysteine. The protein is Glutathione biosynthesis bifunctional protein GshAB of Mannheimia succiniciproducens (strain KCTC 0769BP / MBEL55E).